A 91-amino-acid polypeptide reads, in one-letter code: Small ribosomal subunit protein uS19 (91 aa).

This sequence belongs to the universal ribosomal protein uS19 family.

In terms of biological role, protein S19 forms a complex with S13 that binds strongly to the 16S ribosomal RNA. This is Small ribosomal subunit protein uS19 from Pseudomonas fluorescens (strain SBW25).